The chain runs to 336 residues: D-alanine--D-alanine ligase (336 aa).

In terms of domain architecture, ATP-grasp spans 124–330 (KMWFSALGIP…FTEYLSLVIN (207 aa)). 154 to 209 (ALENWGSIFVKAASQGSSVGCYKVDDSSKVAGVLKDAFGYAPYVIVEKTIKARELE) contacts ATP. Positions 284, 297, and 299 each coordinate Mg(2+).

Belongs to the D-alanine--D-alanine ligase family. It depends on Mg(2+) as a cofactor. Mn(2+) serves as cofactor.

The protein localises to the cytoplasm. The enzyme catalyses 2 D-alanine + ATP = D-alanyl-D-alanine + ADP + phosphate + H(+). Its pathway is cell wall biogenesis; peptidoglycan biosynthesis. In terms of biological role, cell wall formation. The polypeptide is D-alanine--D-alanine ligase (Shewanella sp. (strain MR-4)).